The chain runs to 120 residues: NAD(P)H-quinone oxidoreductase subunit 3, chloroplastic (120 aa).

The next 3 helical transmembrane spans lie at 2–22, 64–84, and 88–108; these read FLLY…VIPI, MFAL…PWAL, and ILGV…VLGL.

It belongs to the complex I subunit 3 family. In terms of assembly, NDH is composed of at least 16 different subunits, 5 of which are encoded in the nucleus.

Its subcellular location is the plastid. It is found in the chloroplast thylakoid membrane. The catalysed reaction is a plastoquinone + NADH + (n+1) H(+)(in) = a plastoquinol + NAD(+) + n H(+)(out). The enzyme catalyses a plastoquinone + NADPH + (n+1) H(+)(in) = a plastoquinol + NADP(+) + n H(+)(out). Functionally, NDH shuttles electrons from NAD(P)H:plastoquinone, via FMN and iron-sulfur (Fe-S) centers, to quinones in the photosynthetic chain and possibly in a chloroplast respiratory chain. The immediate electron acceptor for the enzyme in this species is believed to be plastoquinone. Couples the redox reaction to proton translocation, and thus conserves the redox energy in a proton gradient. The polypeptide is NAD(P)H-quinone oxidoreductase subunit 3, chloroplastic (Oenothera biennis (German evening primrose)).